The primary structure comprises 154 residues: Prefoldin subunit alpha (154 aa).

A disordered region spans residues 123-154 (EAEQLEQQAQQAQQQMMQQQMQAQQQPQDGEQ). Residues 127-154 (LEQQAQQAQQQMMQQQMQAQQQPQDGEQ) are compositionally biased toward low complexity.

This sequence belongs to the prefoldin alpha subunit family. As to quaternary structure, heterohexamer of two alpha and four beta subunits.

The protein resides in the cytoplasm. Functionally, molecular chaperone capable of stabilizing a range of proteins. Seems to fulfill an ATP-independent, HSP70-like function in archaeal de novo protein folding. This Halobacterium salinarum (strain ATCC 29341 / DSM 671 / R1) protein is Prefoldin subunit alpha.